We begin with the raw amino-acid sequence, 463 residues long: Probable mannan endo-1,4-beta-mannosidase F (463 aa).

A signal peptide spans 1-18 (MRSLSSIALLSVVGAASA). The region spanning 19 to 54 (QAGPWAQCGGKSFSGSSECASGWKCQELNEWFSQCV) is the CBM1 domain. Residues 57 to 78 (AESTTPTVSSTPTPTDAPSVSI) form a disordered region. Over residues 59 to 77 (STTPTVSSTPTPTDAPSVS) the composition is skewed to low complexity. The ser-rich linker stretch occupies residues 75–118 (SVSITASVTTGINKSISVSSASKSTPLPSSSSASPSPRPTGSGS). Asn-87 carries an N-linked (GlcNAc...) asparagine glycan. Residues 93–118 (SSASKSTPLPSSSSASPSPRPTGSGS) show a composition bias toward low complexity. Residues 93–121 (SSASKSTPLPSSSSASPSPRPTGSGSFAK) are disordered. A catalytic region spans residues 119–463 (FAKADGLQFS…MDHMENVNKN (345 aa)). Trp-171 and Asn-285 together coordinate substrate. Glu-286 acts as the Proton donor/acceptor in catalysis. A substrate-binding site is contributed by Tyr-361. The active-site Nucleophile is the Glu-395. Trp-424 is a binding site for substrate.

Belongs to the glycosyl hydrolase 5 (cellulase A) family.

It localises to the secreted. It catalyses the reaction Random hydrolysis of (1-&gt;4)-beta-D-mannosidic linkages in mannans, galactomannans and glucomannans.. Functionally, endo-1,4-mannanase, a crucial enzyme for depolymerization of seed galactomannans and wood galactoglucomannans. The polypeptide is Probable mannan endo-1,4-beta-mannosidase F (manF) (Aspergillus oryzae (strain ATCC 42149 / RIB 40) (Yellow koji mold)).